A 775-amino-acid polypeptide reads, in one-letter code: Serine/threonine-protein kinase ppk6 (775 aa).

A phosphoserine mark is found at Ser-132 and Ser-134. A Protein kinase domain is found at 503-758 (YTTIKELGIG…IEETLQHHWF (256 aa)). Residues 509-517 (LGIGAYGQV) and Lys-533 contribute to the ATP site. Asp-636 acts as the Proton acceptor in catalysis.

The protein belongs to the protein kinase superfamily. Ser/Thr protein kinase family.

It is found in the cytoplasm. The protein localises to the nucleus. The enzyme catalyses L-seryl-[protein] + ATP = O-phospho-L-seryl-[protein] + ADP + H(+). The catalysed reaction is L-threonyl-[protein] + ATP = O-phospho-L-threonyl-[protein] + ADP + H(+). This Schizosaccharomyces pombe (strain 972 / ATCC 24843) (Fission yeast) protein is Serine/threonine-protein kinase ppk6 (ppk6).